Reading from the N-terminus, the 169-residue chain is Large ribosomal subunit protein uL10 (169 aa).

This sequence belongs to the universal ribosomal protein uL10 family. In terms of assembly, part of the ribosomal stalk of the 50S ribosomal subunit. The N-terminus interacts with L11 and the large rRNA to form the base of the stalk. The C-terminus forms an elongated spine to which L12 dimers bind in a sequential fashion forming a multimeric L10(L12)X complex.

Its function is as follows. Forms part of the ribosomal stalk, playing a central role in the interaction of the ribosome with GTP-bound translation factors. This chain is Large ribosomal subunit protein uL10, found in Rickettsia typhi (strain ATCC VR-144 / Wilmington).